A 497-amino-acid chain; its full sequence is Cysteine-rich secretory protein LCCL domain-containing 2 (497 aa).

The N-terminal stretch at 1–22 is a signal peptide; the sequence is MSCVLGGVIPLGLLFLVCGSQG. Residue asparagine 27 is glycosylated (N-linked (GlcNAc...) asparagine). One can recognise an SCP domain in the interval 62-200; that stretch reads LHNKLRGQVQ…ENAVYFVCNY (139 aa). LCCL domains lie at 284 to 379 and 385 to 488; these read MTQV…SSSF and KVQD…RDGK. Cystine bridges form between cysteine 290/cysteine 308, cysteine 312/cysteine 332, cysteine 391/cysteine 413, and cysteine 417/cysteine 440.

The protein belongs to the CRISP family. Binds to heparin, dermatan sulfate and chondroitin sulfate.

It localises to the secreted. Functionally, promotes matrix assembly. The sequence is that of Cysteine-rich secretory protein LCCL domain-containing 2 (CRISPLD2) from Homo sapiens (Human).